A 92-amino-acid chain; its full sequence is Acyl carrier protein (92 aa).

The Carrier domain maps to 1–84 (MPSTADERQL…QIAAHLAEAV (84 aa)). Ser44 carries the post-translational modification O-(pantetheine 4'-phosphoryl)serine.

It belongs to the acyl carrier protein (ACP) family. Post-translationally, 4'-phosphopantetheine is transferred from CoA to a specific serine of apo-ACP by AcpS. This modification is essential for activity because fatty acids are bound in thioester linkage to the sulfhydryl of the prosthetic group.

It localises to the cytoplasm. It participates in lipid metabolism; fatty acid biosynthesis. Functionally, carrier of the growing fatty acid chain in fatty acid biosynthesis. The polypeptide is Acyl carrier protein (Streptomyces coelicolor (strain ATCC BAA-471 / A3(2) / M145)).